The chain runs to 256 residues: Pimeloyl-[acyl-carrier protein] methyl ester esterase (256 aa).

Positions 15–242 (HLVLLHGWGL…AAHAPFISHP (228 aa)) constitute an AB hydrolase-1 domain. Residues W22, 82–83 (SL), and 143–147 (FLALQ) contribute to the substrate site. Catalysis depends on S82, which acts as the Nucleophile. Active-site residues include D207 and H235. H235 is a binding site for substrate.

It belongs to the AB hydrolase superfamily. Carboxylesterase BioH family. Monomer.

The protein resides in the cytoplasm. The enzyme catalyses 6-carboxyhexanoyl-[ACP] methyl ester + H2O = 6-carboxyhexanoyl-[ACP] + methanol + H(+). It functions in the pathway cofactor biosynthesis; biotin biosynthesis. Functionally, the physiological role of BioH is to remove the methyl group introduced by BioC when the pimeloyl moiety is complete. It allows to synthesize pimeloyl-ACP via the fatty acid synthetic pathway through the hydrolysis of the ester bonds of pimeloyl-ACP esters. The polypeptide is Pimeloyl-[acyl-carrier protein] methyl ester esterase (Escherichia fergusonii (strain ATCC 35469 / DSM 13698 / CCUG 18766 / IAM 14443 / JCM 21226 / LMG 7866 / NBRC 102419 / NCTC 12128 / CDC 0568-73)).